The primary structure comprises 354 residues: Uroporphyrinogen decarboxylase (354 aa).

Residues 27–31, aspartate 77, tyrosine 154, threonine 209, and histidine 327 contribute to the substrate site; that span reads RQAGR.

This sequence belongs to the uroporphyrinogen decarboxylase family. As to quaternary structure, homodimer.

The protein resides in the cytoplasm. It catalyses the reaction uroporphyrinogen III + 4 H(+) = coproporphyrinogen III + 4 CO2. The protein operates within porphyrin-containing compound metabolism; protoporphyrin-IX biosynthesis; coproporphyrinogen-III from 5-aminolevulinate: step 4/4. Functionally, catalyzes the decarboxylation of four acetate groups of uroporphyrinogen-III to yield coproporphyrinogen-III. This is Uroporphyrinogen decarboxylase from Escherichia coli O7:K1 (strain IAI39 / ExPEC).